Here is a 335-residue protein sequence, read N- to C-terminus: Transaldolase (335 aa).

Position 2 is an N-acetylserine (Ser2). The active-site Schiff-base intermediate with substrate is Lys144.

This sequence belongs to the transaldolase family. Type 1 subfamily. In terms of assembly, homodimer.

The catalysed reaction is D-sedoheptulose 7-phosphate + D-glyceraldehyde 3-phosphate = D-erythrose 4-phosphate + beta-D-fructose 6-phosphate. It participates in carbohydrate degradation; pentose phosphate pathway; D-glyceraldehyde 3-phosphate and beta-D-fructose 6-phosphate from D-ribose 5-phosphate and D-xylulose 5-phosphate (non-oxidative stage): step 2/3. Its function is as follows. Transaldolase is important for the balance of metabolites in the pentose-phosphate pathway. This Saccharomyces cerevisiae (strain ATCC 204508 / S288c) (Baker's yeast) protein is Transaldolase (TAL1).